The chain runs to 144 residues: MINFNFFMNDVVRQAREEIVSAGYTELTTPEAVEEAFKRNGTTLVMVNSVCGCAGGIARPAAAHSVHYDKRPNHLVTVFAGQDKEATARAREYFEGYPPSSPSFALLKDGKIVTMVERHEIEGHEPMQVIAKLQSYFEENCEEL.

This sequence belongs to the bacilliredoxin family.

The polypeptide is Bacilliredoxin BT9727_3899 (Bacillus thuringiensis subsp. konkukian (strain 97-27)).